Here is a 527-residue protein sequence, read N- to C-terminus: Peptide chain release factor 3 (527 aa).

Positions 9-277 (AKRRTFAIIS…AVVDWAPRPL (269 aa)) constitute a tr-type G domain. GTP contacts are provided by residues 18–25 (SHPDAGKT), 86–90 (DTPGH), and 140–143 (NKLD).

It belongs to the TRAFAC class translation factor GTPase superfamily. Classic translation factor GTPase family. PrfC subfamily.

It localises to the cytoplasm. Its function is as follows. Increases the formation of ribosomal termination complexes and stimulates activities of RF-1 and RF-2. It binds guanine nucleotides and has strong preference for UGA stop codons. It may interact directly with the ribosome. The stimulation of RF-1 and RF-2 is significantly reduced by GTP and GDP, but not by GMP. In Pseudomonas putida (strain ATCC 47054 / DSM 6125 / CFBP 8728 / NCIMB 11950 / KT2440), this protein is Peptide chain release factor 3.